We begin with the raw amino-acid sequence, 389 residues long: Putative F-box protein At3g10240 (389 aa).

The segment at 1–26 is disordered; sequence MEQQEEKRKIKAYQRKSKRSKSGSSS. Basic residues predominate over residues 9 to 21; it reads KIKAYQRKSKRSK. The region spanning 21–66 is the F-box domain; the sequence is KSGSSSIPLDLVSEILLRLPEKSVARFRCVSKPWSSITTEPYFINL.

This chain is Putative F-box protein At3g10240, found in Arabidopsis thaliana (Mouse-ear cress).